A 403-amino-acid polypeptide reads, in one-letter code: Na(+)-translocating NADH-quinone reductase subunit B (403 aa).

4 helical membrane-spanning segments follow: residues 56–76, 121–141, 164–184, and 195–212; these read MMIL…WNTG, AYFL…EVLF, LPPS…VVIG, and FLNP…AYPA. Position 230 is an FMN phosphoryl threonine (Thr230). The next 6 helical transmembrane spans lie at 237–257, 265–285, 287–307, 312–332, 348–368, and 371–391; these read AGGV…FLGI, TSTL…IAAW, IVAG…LIGS, MFAM…GTLF, WAFG…NPAF, and GMML…HFVV.

It belongs to the NqrB/RnfD family. In terms of assembly, composed of six subunits; NqrA, NqrB, NqrC, NqrD, NqrE and NqrF. It depends on FMN as a cofactor.

It localises to the cell inner membrane. It catalyses the reaction a ubiquinone + n Na(+)(in) + NADH + H(+) = a ubiquinol + n Na(+)(out) + NAD(+). NQR complex catalyzes the reduction of ubiquinone-1 to ubiquinol by two successive reactions, coupled with the transport of Na(+) ions from the cytoplasm to the periplasm. NqrA to NqrE are probably involved in the second step, the conversion of ubisemiquinone to ubiquinol. The sequence is that of Na(+)-translocating NADH-quinone reductase subunit B from Azotobacter vinelandii (strain DJ / ATCC BAA-1303).